A 136-amino-acid polypeptide reads, in one-letter code: Protein K5 (136 aa).

This sequence belongs to the poxviridae K5 protein family.

In Homo sapiens (Human), this protein is Protein K5.